A 132-amino-acid chain; its full sequence is Nickel-responsive regulator (132 aa).

Ni(2+)-binding residues include H76, H87, H89, and C95.

This sequence belongs to the transcriptional regulatory CopG/NikR family. As to quaternary structure, homotetramer. It depends on Ni(2+) as a cofactor.

Transcriptional repressor of the nikABCDE operon. Is active in the presence of excessive concentrations of intracellular nickel. This Klebsiella pneumoniae subsp. pneumoniae (strain ATCC 700721 / MGH 78578) protein is Nickel-responsive regulator.